A 211-amino-acid polypeptide reads, in one-letter code: Small ribosomal subunit protein uS4 (211 aa).

The S4 RNA-binding domain maps to 98 to 161; that stretch reads RRLDNVVYRL…RDIPFIKENL (64 aa).

It belongs to the universal ribosomal protein uS4 family. Part of the 30S ribosomal subunit. Contacts protein S5. The interaction surface between S4 and S5 is involved in control of translational fidelity.

One of the primary rRNA binding proteins, it binds directly to 16S rRNA where it nucleates assembly of the body of the 30S subunit. Functionally, with S5 and S12 plays an important role in translational accuracy. This is Small ribosomal subunit protein uS4 from Aquifex aeolicus (strain VF5).